Here is a 1159-residue protein sequence, read N- to C-terminus: Caspase recruitment domain-containing protein 11 (1159 aa).

Positions 18-110 (EEEALWDNVE…ELYKLVTGKE (93 aa)) constitute a CARD domain. The segment at 111–128 (PTRRFSTIVVEEGHEGLT) is linker. A coiled-coil region spans residues 176-449 (FQERYYKMKE…KDNGSLDQSL (274 aa)). A disordered region spans residues 441 to 496 (DNGSLDQSLPRHLPATIISQNLGDTSPRTNGQEADDSSTSEESPEDSKYFLPYHPP). 2 positions are modified to phosphoserine: Ser448 and Ser466. The inhibitory domain (ID) stretch occupies residues 450–671 (PRHLPATIIS…GHVRGTGPLV (222 aa)). Residues 457-472 (IISQNLGDTSPRTNGQ) show a composition bias toward polar residues. The span at 473–484 (EADDSSTSEESP) shows a compositional bias: acidic residues. Phosphoserine is present on residues Ser512 and Ser540. The segment at 532–578 (HEEDFTDGSPSSSRSLPVTSSFSKMQPHRSRSSIMSITAEPPGNDSI) is disordered. A compositionally biased stretch (low complexity) spans 540–554 (SPSSSRSLPVTSSFS). Ser564 carries the post-translational modification Phosphoserine; by PKC/PRKCB and PKC/PRKCQ. Ser598 carries the post-translational modification Phosphoserine. Positions 610–631 (NHERYSFGPPSIHSSSSSHQSE) are disordered. Residues 620–630 (SIHSSSSSHQS) show a composition bias toward low complexity. Ser649 and Ser657 each carry phosphoserine; by PKC/PRKCB and PKC/PRKCQ. A PDZ domain is found at 672–760 (QHTTLNGDGL…LITLHYKVNH (89 aa)). 2 positions are modified to phosphoserine: Ser891 and Ser930. Residues 978-1145 (RRRPVLFTPT…LLRVLKDKIV (168 aa)) form the Guanylate kinase-like domain.

Homodimer; disulfide-linked. Homomultimer; polymerizes following activation, forming a nucleating helical template that seeds BCL10-filament formation via a CARD-CARD interaction. Interacts (via CARD domain) with BCL10 (via CARD domain); interaction takes place following CARD11 activation and polymerization, leading to the formation of a filamentous CBM complex assembly. Component of a CBM complex (CARD11-BCL10-MALT1) complex involved in NF-kappa-B activation. Found in a membrane raft complex, at least composed of BCL10, CARD11, DPP4 and IKBKB. Interacts (via PDZ domain) with DPP4 (via cytoplasmic tail). Post-translationally, phosphorylation at Ser-564, Ser-649 and Ser-657 by PRKCB and PRKCQ leads to a shift from an inactive to an active form that activates the NF-kappa-B signaling.

It is found in the cytoplasm. The protein localises to the membrane raft. Maintained in an autoinhibited state via homodimerization in which the CARD domain forms an extensive interaction with the adjacent linker and coiled-coil regions. Activation downstream of T-cell receptor (TCR) by phosphorylation by PRKCB and PRKCQ triggers CARD11 homooligomerization and BCL10 recruitment, followed by activation of NF-kappa-B. Adapter protein that plays a key role in adaptive immune response by transducing the activation of NF-kappa-B downstream of T-cell receptor (TCR) and B-cell receptor (BCR) engagement. Transduces signals downstream TCR or BCR activation via the formation of a multiprotein complex together with BCL10 and MALT1 that induces NF-kappa-B and MAP kinase p38 (MAPK11, MAPK12, MAPK13 and/or MAPK14) pathways. Upon activation in response to TCR or BCR triggering, CARD11 homooligomerizes to form a nucleating helical template that recruits BCL10 via CARD-CARD interaction, thereby promoting polymerization of BCL10 and subsequent recruitment of MALT1: this leads to I-kappa-B kinase (IKK) phosphorylation and degradation, and release of NF-kappa-B proteins for nuclear translocation. Its binding to DPP4 induces T-cell proliferation and NF-kappa-B activation in a T-cell receptor/CD3-dependent manner. Promotes linear ubiquitination of BCL10 by promoting the targeting of BCL10 to RNF31/HOIP. Stimulates the phosphorylation of BCL10. Also activates the TORC1 signaling pathway. This Mus musculus (Mouse) protein is Caspase recruitment domain-containing protein 11.